A 545-amino-acid polypeptide reads, in one-letter code: CTP synthase (545 aa).

The amidoligase domain stretch occupies residues methionine 1–leucine 266. Serine 14 serves as a coordination point for CTP. Serine 14 serves as a coordination point for UTP. Residues serine 15–isoleucine 20 and aspartate 72 each bind ATP. Mg(2+) contacts are provided by aspartate 72 and glutamate 140. CTP contacts are provided by residues aspartate 147–glutamate 149, lysine 187–glutamine 192, and lysine 223. Residues lysine 187 to glutamine 192 and lysine 223 each bind UTP. Lysine 239–valine 241 lines the ATP pocket. Residues threonine 291 to arginine 542 form the Glutamine amidotransferase type-1 domain. Glycine 352 is a binding site for L-glutamine. The active-site Nucleophile; for glutamine hydrolysis is cysteine 379. L-glutamine-binding positions include leucine 380 to glutamine 383, glutamate 403, and arginine 470. Active-site residues include histidine 515 and glutamate 517.

Belongs to the CTP synthase family. In terms of assembly, homotetramer.

It carries out the reaction UTP + L-glutamine + ATP + H2O = CTP + L-glutamate + ADP + phosphate + 2 H(+). It catalyses the reaction L-glutamine + H2O = L-glutamate + NH4(+). The enzyme catalyses UTP + NH4(+) + ATP = CTP + ADP + phosphate + 2 H(+). The protein operates within pyrimidine metabolism; CTP biosynthesis via de novo pathway; CTP from UDP: step 2/2. With respect to regulation, allosterically activated by GTP, when glutamine is the substrate; GTP has no effect on the reaction when ammonia is the substrate. The allosteric effector GTP functions by stabilizing the protein conformation that binds the tetrahedral intermediate(s) formed during glutamine hydrolysis. Inhibited by the product CTP, via allosteric rather than competitive inhibition. Its function is as follows. Catalyzes the ATP-dependent amination of UTP to CTP with either L-glutamine or ammonia as the source of nitrogen. Regulates intracellular CTP levels through interactions with the four ribonucleotide triphosphates. This chain is CTP synthase, found in Salmonella arizonae (strain ATCC BAA-731 / CDC346-86 / RSK2980).